Reading from the N-terminus, the 197-residue chain is MSASRFVKCVTVGDGAVGKTCLLISYTSNTFPTDYVPTVFDNFSANVVVNGSTVNLGLWDTAGQEDYNRLRPLSYRGADVFILAFSLISKASYENVSKKWIPELKHYAPGVPIVLVGTKLDLRDDKQFFIDHPGAVPITTAQGEELRKQIGAPTYIECSSKTQENVKAVFDAAIRVVLQPPKQKKKKSKAQKACSIL.

13-20 serves as a coordination point for GTP; that stretch reads GDGAVGKT. The Effector region motif lies at 35–43; it reads YVPTVFDNF. GTP is bound by residues 60–64 and 118–121; these read DTAGQ and TKLD. Cysteine methyl ester is present on Cys194. Residue Cys194 is the site of S-geranylgeranyl cysteine attachment. A propeptide spans 195 to 197 (removed in mature form); it reads SIL.

The protein belongs to the small GTPase superfamily. Rho family. As to quaternary structure, part of a complex containing ROPGEF1 and PRK2. Interacts with UGT1, ICR1, ICR2, ICR3, ICR4 and ICR5. Interacts with PHIP1 when activated by GTP. As to expression, exclusively expressed in mature pollen and pollen tubes.

Its subcellular location is the cytoplasm. The protein localises to the membrane. It carries out the reaction GTP + H2O = GDP + phosphate + H(+). May be involved in cell polarity control during the actin-dependent tip growth of pollen tubes. May regulate callose synthase 1 (CALS1) activity through the interaction with UGT1. Its function is as follows. Inactive GDP-bound Rho GTPases reside in the cytosol, are found in a complex with Rho GDP-dissociation inhibitors (Rho GDIs), and are released from the GDI protein in order to translocate to membranes upon activation. The polypeptide is Rac-like GTP-binding protein ARAC11 (Arabidopsis thaliana (Mouse-ear cress)).